Consider the following 224-residue polypeptide: 7-cyano-7-deazaguanine synthase (224 aa).

Residue 10–20 participates in ATP binding; sequence FSGGQDSTTCL. Zn(2+) contacts are provided by cysteine 193, cysteine 201, cysteine 204, and cysteine 207.

This sequence belongs to the QueC family. Zn(2+) serves as cofactor.

The catalysed reaction is 7-carboxy-7-deazaguanine + NH4(+) + ATP = 7-cyano-7-deazaguanine + ADP + phosphate + H2O + H(+). Its pathway is purine metabolism; 7-cyano-7-deazaguanine biosynthesis. In terms of biological role, catalyzes the ATP-dependent conversion of 7-carboxy-7-deazaguanine (CDG) to 7-cyano-7-deazaguanine (preQ(0)). This chain is 7-cyano-7-deazaguanine synthase, found in Neisseria gonorrhoeae (strain ATCC 700825 / FA 1090).